Reading from the N-terminus, the 514-residue chain is MQQLNPSEISEIIKGRIEKLDVTSQARNEGTVVSVSDGIVRIHGLADVMYGEMIEFPGGVYGMALNLEQDSVGAVVLGAYTTLAEGMSAKCTGRILEVPVGKELLGRVVDALGNPVDGKGPLGNTETDAVEKVAPGVIWRKSVDQPVQTGYKAVDAMIPVGRGQRELIIGDRQIGKTALAIDAIINQKDSGIFCVYVAIGQKQSTIANVVRKLEENGALANTIIVAASASESAALQFLAPYSGCTMGEFFRDRGEDALIVYDDLSKQAVAYRQISLLLRRPPGREAYPGDVFYLHSRLLERASRVSEEYVEKFTNGAVTGKTGSLTALPIIETQAGDVSAFVPTNVISITDGQIFLESAMFNSGIRPAVNAGVSVSRVGGAAQTKIIKKLSGGIRTALAQYRELAAFAQFASDLDEATRKQLEHGQRVTELMKQKQYAPMSIADMSLSLYAAERGFLTDIEITKIGSFEQALIAFFNRDHADLMAKINVKGDFNDEIDAGLKAGIEKFKATQTW.

G170–T177 is an ATP binding site.

It belongs to the ATPase alpha/beta chains family. As to quaternary structure, F-type ATPases have 2 components, CF(1) - the catalytic core - and CF(0) - the membrane proton channel. CF(1) has five subunits: alpha(3), beta(3), gamma(1), delta(1), epsilon(1). CF(0) has three main subunits: a(1), b(2) and c(9-12). The alpha and beta chains form an alternating ring which encloses part of the gamma chain. CF(1) is attached to CF(0) by a central stalk formed by the gamma and epsilon chains, while a peripheral stalk is formed by the delta and b chains.

It is found in the cell inner membrane. It catalyses the reaction ATP + H2O + 4 H(+)(in) = ADP + phosphate + 5 H(+)(out). In terms of biological role, produces ATP from ADP in the presence of a proton gradient across the membrane. The alpha chain is a regulatory subunit. The polypeptide is ATP synthase subunit alpha (Pseudomonas fluorescens (strain Pf0-1)).